Reading from the N-terminus, the 68-residue chain is Large ribosomal subunit protein bL31 (68 aa).

Residues Cys-17, Cys-19, Cys-37, and Cys-40 each coordinate Zn(2+).

Belongs to the bacterial ribosomal protein bL31 family. Type A subfamily. Part of the 50S ribosomal subunit. The cofactor is Zn(2+).

Functionally, binds the 23S rRNA. In Dehalococcoides mccartyi (strain CBDB1), this protein is Large ribosomal subunit protein bL31.